A 213-amino-acid polypeptide reads, in one-letter code: Large ribosomal subunit protein uL1 (213 aa).

This sequence belongs to the universal ribosomal protein uL1 family. Part of the 50S ribosomal subunit.

Functionally, probably involved in E site tRNA release. Binds directly to 23S rRNA. Its function is as follows. Protein L1 is also a translational repressor protein, it controls the translation of the L1 operon by binding to its mRNA. Thus it also controls transcription of L10 and L12 by translational coupling. Unlike the case in E.coli, where the site is in the untranslated mRNA leader, this site is within the L1 protein's structural gene. The chain is Large ribosomal subunit protein uL1 from Methanococcus vannielii (strain ATCC 35089 / DSM 1224 / JCM 13029 / OCM 148 / SB).